A 228-amino-acid chain; its full sequence is tRNA (guanine-N(1)-)-methyltransferase (228 aa).

S-adenosyl-L-methionine is bound by residues glycine 111 and 130–135 (IGDFVL).

Belongs to the RNA methyltransferase TrmD family. Homodimer.

It is found in the cytoplasm. It carries out the reaction guanosine(37) in tRNA + S-adenosyl-L-methionine = N(1)-methylguanosine(37) in tRNA + S-adenosyl-L-homocysteine + H(+). Functionally, specifically methylates guanosine-37 in various tRNAs. The polypeptide is tRNA (guanine-N(1)-)-methyltransferase (Ureaplasma urealyticum serovar 10 (strain ATCC 33699 / Western)).